Here is a 105-residue protein sequence, read N- to C-terminus: uncharacterized protein (105 aa).

This is an uncharacterized protein from Bacillus subtilis (strain 168).